The following is a 505-amino-acid chain: Adenylosuccinate synthetase, chloroplastic (505 aa).

The transit peptide at 1 to 60 directs the protein to the chloroplast; the sequence is MTTMNISTLRLDSNPITTSTKSTTHRSGALGYNGSYSCRLLQFQKKNKAPSIIVCSTKPL. Residues 92 to 98 and 120 to 122 each bind GTP; these read GDEGKGK and GHT. The Proton acceptor role is filled by Asp-93. Mg(2+)-binding residues include Asp-93 and Gly-120. IMP is bound by residues 93 to 96, 118 to 121, Thr-210, Arg-224, Gln-304, Thr-319, and Arg-383; these read DEGK and NAGH. His-121 functions as the Proton donor in the catalytic mechanism. A substrate-binding site is contributed by 379–385; the sequence is TTTGRPR. GTP is bound by residues Arg-385, 411–413, and 494–496; these read KLD and GVG.

This sequence belongs to the adenylosuccinate synthetase family. In terms of assembly, homodimer. It depends on Mg(2+) as a cofactor.

The protein resides in the plastid. Its subcellular location is the chloroplast. It catalyses the reaction IMP + L-aspartate + GTP = N(6)-(1,2-dicarboxyethyl)-AMP + GDP + phosphate + 2 H(+). Its pathway is purine metabolism; AMP biosynthesis via de novo pathway; AMP from IMP: step 1/2. Functionally, plays an important role in the de novo pathway and in the salvage pathway of purine nucleotide biosynthesis. Catalyzes the first committed step in the biosynthesis of AMP from IMP. The chain is Adenylosuccinate synthetase, chloroplastic from Nicotiana tabacum (Common tobacco).